Reading from the N-terminus, the 257-residue chain is MPAPTNTFKSALASGDLLLGCWAGFADPYATEVLATAGYDWLVIDGEHAPNDLRSISAQLAVLRGQHSHPVVRLPMGEPWLIKQVLDAGAQTLLIPMVESAEEARDLVRAMRYPPDGIRGSGAALARASHFADIPDYIATANDQMCLLVQVETRAGIDALDEILAVDGVDGVFIGPSDLAADMGHMGDASQADVAETIEDALARIRTAGRAAGILALDDATIRRYRDWGANFLAVGIDVVMLAQTARQTLAKWRTDD.

The active-site Proton acceptor is His48. A divalent metal cation is bound by residues Glu152 and Asp178.

Belongs to the HpcH/HpaI aldolase family. The cofactor is a divalent metal cation.

It carries out the reaction D-glyceraldehyde + 3-hydroxypyruvate = 2-dehydro-D-gluconate. The enzyme catalyses D-glyceraldehyde + pyruvate = 2-dehydro-3-deoxy-L-galactonate. It catalyses the reaction 2-dehydro-3-deoxy-D-gluconate = D-glyceraldehyde + pyruvate. In terms of biological role, aldolase which can catalyze in vitro the aldolisation reaction between hydroxypyruvate (HPA) or pyruvate (PA) and D-glyceraldehyde (D-GA). The condensation of hydroxypyruvate and D-glyceraldehyde produces 2-dehydro-D-gluconate as the major product. The condensation of pyruvate and D-glyceraldehyde produces 2-dehydro-3-deoxy-L-galactonate as the major product and 2-dehydro-3-deoxy-D-gluconate. This is Hydroxypyruvate/pyruvate aldolase from Roseovarius nubinhibens (strain ATCC BAA-591 / DSM 15170 / ISM).